Here is an 876-residue protein sequence, read N- to C-terminus: Importin subunit beta-1 (876 aa).

Met1 carries the post-translational modification N-acetylmethionine. HEAT repeat units follow at residues 3–29 (LITI…ERAA), 32–62 (NLPT…LQIK), 85–120 (ANAR…ACAE), 129–160 (LIPQ…ICQD), and 170–201 (SNEI…LLNS). Phosphoserine is present on Ser12. Positions 21–101 (AQKFLERAAV…KNYVLQTLGT (81 aa)) constitute an Importin N-terminal domain. The residue at position 211 (Lys211) is an N6-acetyllysine. HEAT repeat units follow at residues 212-247 (ESER…IMSL), 260-302 (LFAI…EAAE), 314-359 (YAKG…STCC), 363-392 (IVPH…AFGS), 399-438 (PNQL…ICEL), 449-485 (LAPL…YEAA), 500-537 (SSSF…EIVK), 544-592 (YPAV…QNVL), 597-639 (HQDA…VEVL), 644-680 (LKYM…LCRA), 686-724 (LPFC…ALAI), 729-777 (KKYL…QGLK), 785-828 (PDVM…LCTA), and 834-875 (LKLV…LKNQ). Positions 286–462 (VCDEEMDLAI…LQCLIEGLSA (177 aa)) are essential for high affinity interaction with RPL23A. The tract at residues 329–342 (TLTKQDENDDDDDW) is IAB-binding. Positions 334 to 419 (DENDDDDDWN…MPTLIELMKD (86 aa)) are ran-GTP binding. N6-acetyllysine is present on residues Lys835 and Lys867.

It belongs to the importin beta family. Importin beta-1 subfamily. In terms of assembly, forms a complex with an importin alpha subunit. Interacts with XPO1. Forms a heterodimer with IPO7. The KPNB1/IPO7 heterodimer interacts with H1 histone. Interacts with SNUPN. Interacts with H2A, H2B, H3 and H4 histones. Component of an import snRNP complex composed of KPNB1, SNUPN, SMN1 and ZNF259. Component of a nuclear export receptor complex composed of KPNB1, Ran, SNUPN and XPO1. Interacts with SRY. Interacts with PRKCI/atypical protein kinase C iota. Interacts with KPNA2. Interacts with KPNA7. Interacts with SNAI1 (via zinc fingers) and SNAI2 (via zinc fingers). Interacts with SLC35G1 and STIM1. Interacts with DCAF8. Interacts with RAN. Interacts with NUMA1 (via C-terminus); this interaction is inhibited by RanGTP. Interacts with ZBED1/hDREF; required for nuclear import of ZBED1/hDREF. Interacts with SRP19. Interacts with RPL23A (via BIB domain), RPS7 and RPL5. In terms of processing, mono-ADP-ribosylated by PARP16.

It is found in the cytoplasm. The protein localises to the nucleus envelope. Functionally, functions in nuclear protein import, either in association with an adapter protein, like an importin-alpha subunit, which binds to nuclear localization signals (NLS) in cargo substrates, or by acting as autonomous nuclear transport receptor. Acting autonomously, serves itself as NLS receptor. Docking of the importin/substrate complex to the nuclear pore complex (NPC) is mediated by KPNB1 through binding to nucleoporin FxFG repeats and the complex is subsequently translocated through the pore by an energy requiring, Ran-dependent mechanism. At the nucleoplasmic side of the NPC, Ran binds to importin-beta and the three components separate and importin-alpha and -beta are re-exported from the nucleus to the cytoplasm where GTP hydrolysis releases Ran from importin. The directionality of nuclear import is thought to be conferred by an asymmetric distribution of the GTP- and GDP-bound forms of Ran between the cytoplasm and nucleus. Mediates autonomously the nuclear import of ribosomal proteins RPL23A, RPS7 and RPL5. In association with IPO7, mediates the nuclear import of H1 histone. In vitro, mediates nuclear import of H2A, H2B, H3 and H4 histones. Imports MRTFA, SNAI1 and PRKCI into the nucleus. This is Importin subunit beta-1 (Kpnb1) from Mus musculus (Mouse).